The sequence spans 701 residues: Polyribonucleotide nucleotidyltransferase (701 aa).

The Mg(2+) site is built by Asp487 and Asp493. The KH domain maps to 554–613 (PTMIAMKIDTDKIRDVIGKGGATIRAICEETKASIDIEDDGSIKIFGETKEAADAAKQRI). The region spanning 623–691 (GKIYVGKVER…NRGRIKLSIK (69 aa)) is the S1 motif domain.

Belongs to the polyribonucleotide nucleotidyltransferase family. Component of the RNA degradosome, which is a multiprotein complex involved in RNA processing and mRNA degradation. The cofactor is Mg(2+).

The protein resides in the cytoplasm. It catalyses the reaction RNA(n+1) + phosphate = RNA(n) + a ribonucleoside 5'-diphosphate. Functionally, involved in mRNA degradation. Catalyzes the phosphorolysis of single-stranded polyribonucleotides processively in the 3'- to 5'-direction. The protein is Polyribonucleotide nucleotidyltransferase of Pseudomonas entomophila (strain L48).